The following is a 458-amino-acid chain: tRNA modification GTPase MnmE (458 aa).

The (6S)-5-formyl-5,6,7,8-tetrahydrofolate site is built by Arg-22, Glu-85, and Arg-124. A TrmE-type G domain is found at 220-379 (GLATAIIGRP…LEEAISRLFF (160 aa)). Asn-230 is a binding site for K(+). GTP is bound by residues 230–235 (NVGKSS), 249–255 (TDIPGTT), and 274–277 (DTAG). Ser-234 serves as a coordination point for Mg(2+). 3 residues coordinate K(+): Thr-249, Ile-251, and Thr-254. Thr-255 is a Mg(2+) binding site. Position 458 (Lys-458) interacts with (6S)-5-formyl-5,6,7,8-tetrahydrofolate.

This sequence belongs to the TRAFAC class TrmE-Era-EngA-EngB-Septin-like GTPase superfamily. TrmE GTPase family. As to quaternary structure, homodimer. Heterotetramer of two MnmE and two MnmG subunits. Requires K(+) as cofactor.

The protein resides in the cytoplasm. Its function is as follows. Exhibits a very high intrinsic GTPase hydrolysis rate. Involved in the addition of a carboxymethylaminomethyl (cmnm) group at the wobble position (U34) of certain tRNAs, forming tRNA-cmnm(5)s(2)U34. The polypeptide is tRNA modification GTPase MnmE (Shouchella clausii (strain KSM-K16) (Alkalihalobacillus clausii)).